A 249-amino-acid polypeptide reads, in one-letter code: MNSEFSLAYGNVDSDYALDLLERLDSNWKGTELFTHIRETFQIGLGNVIIVSEQSESLRIPPSLLGSSSPADSDNSPPGTPTNEAQPWFISEDLSKGPFTEAQSTQSSIETLEGEHHAVSSLHLKLNGLSCIGRAVWRATRKMDTRTEVDDILNSITEPRRLTLPGINKMRQCIVRLLLLVPIQVREEILSFAIASGIPSETIEDIRSSTNISAVDTNGRGIAHNSKKRSLAPTQDSRNLRRRIRGHTQ.

Disordered regions lie at residues 61–86 (PPSL…NEAQ) and 217–249 (TNGR…GHTQ). The span at 67–77 (SSSPADSDNSP) shows a compositional bias: low complexity. Residues 240 to 249 (LRRRIRGHTQ) are compositionally biased toward basic residues.

Functionally, plasmid partition require REP1, REP2, and a cis-acting DNA sequence (known as STB). This is Trans-acting factor C (C) from Zygosaccharomyces bailii.